The chain runs to 367 residues: Glutamate 5-kinase (367 aa).

An ATP-binding site is contributed by Lys10. Substrate-binding residues include Ser50, Asp137, and Asn149. Residues Thr169 to Asp170 and Thr211 to Lys217 contribute to the ATP site. In terms of domain architecture, PUA spans Ala275–Glu353.

The protein belongs to the glutamate 5-kinase family.

It is found in the cytoplasm. The enzyme catalyses L-glutamate + ATP = L-glutamyl 5-phosphate + ADP. The protein operates within amino-acid biosynthesis; L-proline biosynthesis; L-glutamate 5-semialdehyde from L-glutamate: step 1/2. Catalyzes the transfer of a phosphate group to glutamate to form L-glutamate 5-phosphate. The chain is Glutamate 5-kinase from Enterobacter sp. (strain 638).